We begin with the raw amino-acid sequence, 353 residues long: MSLPQWCPPHSTLKRNPTTGEDVYCICKRPDYGELMVGCDGCDDWFHFTCLHIPEQFKDLVFSFYCPYCQAGITGKNKDAIINGEGSLPKTLWKRKCRISDCYKPCLQDSKYCSEEHGREFVNDIWSRLKTDEDRAVVKKMVEQTGHIDKFKKFGQLDFIDNNIVVKTDDEKEIFDQIVVRDMTLKTLEDDLQEVQEISLPLFKKKLELLEVYLGWLDNVYTEMRKLDDDAASHVECGKEDSKGTKRKKKKNSSRSRARKNICGYCSTYERIPCSVEEFVRDFGSNEEATKIHEVCTKWKCNRHLDWVSTNQEQYLQQIDSLESMQERLQHLIQARKKQLNIQYYEEILRRGL.

The segment at 22-72 (DVYCICKRPDYGELMVGCDGCDDWFHFTCLHIPEQFKDLVFSFYCPYCQAG) adopts a PHD-type zinc-finger fold. Residues cysteine 25, cysteine 27, cysteine 39, cysteine 42, histidine 47, cysteine 50, cysteine 66, and cysteine 69 each contribute to the Zn(2+) site. The tract at residues 83 to 124 (NGEGSLPKTLWKRKCRISDCYKPCLQDSKYCSEEHGREFVND) is non coventional C3H-type zinc finger. Residue serine 87 is modified to Phosphoserine. 4 residues coordinate Zn(2+): cysteine 97, cysteine 102, cysteine 113, and histidine 117. The segment covering 235-244 (VECGKEDSKG) has biased composition (basic and acidic residues). Positions 235-255 (VECGKEDSKGTKRKKKKNSSR) are disordered. Residues 245–255 (TKRKKKKNSSR) are compositionally biased toward basic residues.

As to quaternary structure, component of the Set1C/COMPASS complex which consists of SET1(2), BRE2(2), SPP1(2), SDC1(1), SHG1(1), SWD1(1), SWD2(1), and SWD3(1).

Its subcellular location is the nucleus. Its function is as follows. Component of the Set1C/COMPASS complex that specifically mono-, di- and trimethylates histone H3 to form H3K4me1/2/3, which subsequently plays a role in telomere length maintenance and transcription elongation regulation. COMPASS recognizes ubiquitinated H2B on one face of the nucleosome which stimulates the methylation of H3 on the opposing face. SPP1/CPS40 can recognize methylated histone lysine residue H3K4me3 or unmethylated H3K4. Stimulates the RNA binding activity of SET1. The chain is COMPASS component SPP1 from Saccharomyces cerevisiae (strain ATCC 204508 / S288c) (Baker's yeast).